We begin with the raw amino-acid sequence, 474 residues long: tRNA-2-methylthio-N(6)-dimethylallyladenosine synthase (474 aa).

One can recognise an MTTase N-terminal domain in the interval 3–120; it reads KKLHIKTWGC…LPEMINSVRG (118 aa). The [4Fe-4S] cluster site is built by Cys12, Cys49, Cys83, Cys157, Cys161, and Cys164. The region spanning 143–378 is the Radical SAM core domain; sequence RADGPSAFVS…INQQVTAWSR (236 aa). The TRAM domain maps to 378–441; the sequence is RRMLGTTQRI…TNSMRGKVVR (64 aa).

It belongs to the methylthiotransferase family. MiaB subfamily. In terms of assembly, monomer. It depends on [4Fe-4S] cluster as a cofactor.

It localises to the cytoplasm. The enzyme catalyses N(6)-dimethylallyladenosine(37) in tRNA + (sulfur carrier)-SH + AH2 + 2 S-adenosyl-L-methionine = 2-methylsulfanyl-N(6)-dimethylallyladenosine(37) in tRNA + (sulfur carrier)-H + 5'-deoxyadenosine + L-methionine + A + S-adenosyl-L-homocysteine + 2 H(+). Its function is as follows. Catalyzes the methylthiolation of N6-(dimethylallyl)adenosine (i(6)A), leading to the formation of 2-methylthio-N6-(dimethylallyl)adenosine (ms(2)i(6)A) at position 37 in tRNAs that read codons beginning with uridine. In Enterobacter sp. (strain 638), this protein is tRNA-2-methylthio-N(6)-dimethylallyladenosine synthase.